The following is a 220-amino-acid chain: MNLKQLAGEYAATFVKDGMKIGLGTGSTVYWTIEKLGERVKEGLSFQAVPTSKETEVLAQQLNIPLISLNDIQSLDLTIDGADEIDSNLHLIKGGGGALLREKIVASSSKELLIIADESKLVTHLGTFPLPVEIIPFSWKQTESKIQSLGCQTTLRLKNNETFITDNNNMIIDCVFPHNITNPANLHNHLKMITGVVETGLFVNMTSKAIIGTKNGIQEL.

Substrate contacts are provided by residues Thr-25–Thr-28, Asp-80–Asp-83, and Lys-93–Gly-96. The active-site Proton acceptor is Glu-102. Lys-120 contributes to the substrate binding site.

It belongs to the ribose 5-phosphate isomerase family. Homodimer.

The catalysed reaction is aldehydo-D-ribose 5-phosphate = D-ribulose 5-phosphate. Its pathway is carbohydrate degradation; pentose phosphate pathway; D-ribose 5-phosphate from D-ribulose 5-phosphate (non-oxidative stage): step 1/1. Functionally, catalyzes the reversible conversion of ribose-5-phosphate to ribulose 5-phosphate. In Bacillus cereus (strain ATCC 10987 / NRS 248), this protein is Ribose-5-phosphate isomerase A.